A 297-amino-acid chain; its full sequence is tRNA pseudouridine synthase B (297 aa).

D41 serves as the catalytic Nucleophile.

The protein belongs to the pseudouridine synthase TruB family. Type 1 subfamily.

The catalysed reaction is uridine(55) in tRNA = pseudouridine(55) in tRNA. Responsible for synthesis of pseudouridine from uracil-55 in the psi GC loop of transfer RNAs. The polypeptide is tRNA pseudouridine synthase B (Synechococcus sp. (strain CC9311)).